Consider the following 229-residue polypeptide: Protein-L-isoaspartate O-methyltransferase (229 aa).

The active site involves Ser65.

Belongs to the methyltransferase superfamily. L-isoaspartyl/D-aspartyl protein methyltransferase family.

The protein localises to the cytoplasm. The enzyme catalyses [protein]-L-isoaspartate + S-adenosyl-L-methionine = [protein]-L-isoaspartate alpha-methyl ester + S-adenosyl-L-homocysteine. Catalyzes the methyl esterification of L-isoaspartyl residues in peptides and proteins that result from spontaneous decomposition of normal L-aspartyl and L-asparaginyl residues. It plays a role in the repair and/or degradation of damaged proteins. The sequence is that of Protein-L-isoaspartate O-methyltransferase from Chlorobium phaeovibrioides (strain DSM 265 / 1930) (Prosthecochloris vibrioformis (strain DSM 265)).